The following is a 153-amino-acid chain: Cytochrome c-type biogenesis protein CcmE (153 aa).

Over 1 to 8 the chain is Cytoplasmic; the sequence is MMTPRQRR. A helical; Signal-anchor for type II membrane protein membrane pass occupies residues 9 to 29; sequence MTWVALMVAGVSLAAFFALTA. The Periplasmic segment spans residues 30–153; sequence FQKNLLYFYT…PADYSEYRKK (124 aa). 2 residues coordinate heme: histidine 124 and tyrosine 128. The segment at 134-153 is disordered; that stretch reads AESLKKNGGLPADYSEYRKK.

This sequence belongs to the CcmE/CycJ family.

Its subcellular location is the cell inner membrane. Functionally, heme chaperone required for the biogenesis of c-type cytochromes. Transiently binds heme delivered by CcmC and transfers the heme to apo-cytochromes in a process facilitated by CcmF and CcmH. The chain is Cytochrome c-type biogenesis protein CcmE from Methylococcus capsulatus (strain ATCC 33009 / NCIMB 11132 / Bath).